We begin with the raw amino-acid sequence, 212 residues long: Large ribosomal subunit protein uL3 (212 aa).

Residues 139–153 show a composition bias toward polar residues; that stretch reads LSHRVTGSIGQNQTP. Residues 139-161 are disordered; that stretch reads LSHRVTGSIGQNQTPGKVFKGKK. Gln-151 carries the N5-methylglutamine modification.

It belongs to the universal ribosomal protein uL3 family. Part of the 50S ribosomal subunit. Forms a cluster with proteins L14 and L19. Methylated by PrmB.

Functionally, one of the primary rRNA binding proteins, it binds directly near the 3'-end of the 23S rRNA, where it nucleates assembly of the 50S subunit. The protein is Large ribosomal subunit protein uL3 of Baumannia cicadellinicola subsp. Homalodisca coagulata.